A 181-amino-acid polypeptide reads, in one-letter code: Ribulose bisphosphate carboxylase small subunit, chloroplastic 6 (181 aa).

A chloroplast-targeting transit peptide spans 1–57; the sequence is MASSIVSSAAVATRSNVAQASMVAPFTGLKSAASFPVTKKNNNVDITSLASNGGRVR.

This sequence belongs to the RuBisCO small chain family. Heterohexadecamer of 8 large and 8 small subunits.

It is found in the plastid. It localises to the chloroplast. RuBisCO catalyzes two reactions: the carboxylation of D-ribulose 1,5-bisphosphate, the primary event in carbon dioxide fixation, as well as the oxidative fragmentation of the pentose substrate. Both reactions occur simultaneously and in competition at the same active site. Although the small subunit is not catalytic it is essential for maximal activity. The chain is Ribulose bisphosphate carboxylase small subunit, chloroplastic 6 from Solanum tuberosum (Potato).